Reading from the N-terminus, the 339-residue chain is MPTFELNKAIVQKAEQQQFDFALSMIKLRGFGGKTEFWDHNLESFTLMAGLAAVTSRIQIYATAATLTLPPAIVARMASTIDSISGGRFGVNLVTGWQKPEYEQMGLWPGDDYFSRRYDYLTEYVHVLRDLWDTGRSDFKGDYFTMNDCRVSPRPQQPMKVICAGQSDAGMAFSAQHADYNFCFGKGVNTPAAFAPTAARMKAAAEKAGRDVGSYVLFMVIADETDEAARAKWEHYKAGADEEALSWLTEQSQKDTRSGADTNVRQMADPTSAVNINMGTLVGSYASVARMLDEVAAVPGTEGVLLTFDDFLTGIDAFGEHIQPLMRCRDHLRVTQEVA.

FMN-binding positions include 26–27 (IK), asparagine 92, glutamate 101, 117–118 (RY), and serine 167.

Belongs to the NtaA/SnaA/DszA monooxygenase family. RutA subfamily.

The enzyme catalyses uracil + FMNH2 + NADH + O2 = (Z)-3-ureidoacrylate + FMN + NAD(+) + H2O + H(+). It carries out the reaction thymine + FMNH2 + NADH + O2 = (Z)-2-methylureidoacrylate + FMN + NAD(+) + H2O + H(+). Functionally, catalyzes the pyrimidine ring opening between N-3 and C-4 by an unusual flavin hydroperoxide-catalyzed mechanism, adding oxygen atoms in the process to yield ureidoacrylate peracid, that immediately reacts with FMN forming ureidoacrylate and FMN-N(5)-oxide. The FMN-N(5)-oxide reacts spontaneously with NADH to produce FMN. Requires the flavin reductase RutF to regenerate FMN in vivo. The chain is Pyrimidine monooxygenase RutA from Cronobacter sakazakii (strain ATCC BAA-894) (Enterobacter sakazakii).